The chain runs to 953 residues: Coatomer subunit beta (953 aa).

T2 is modified (N-acetylthreonine). HEAT repeat units follow at residues 96–131 (HEMI…KEAE), 132–168 (LLEP…NFEH), 240–276 (SERA…SAPT), 277–314 (AIKA…HPAH), 316–353 (RVLQ…SRNV), and 396–433 (DMAA…RFDN). K494 carries the N6-acetyllysine modification.

As to quaternary structure, oligomeric complex that consists of at least the alpha, beta, beta', gamma, delta, epsilon and zeta subunits. Interacts with CAPN8 and PRKCE. Interacts with SCYL1. Interacts with COPG1. Interacts with ARF1 (myristoylated); this interaction is required for binding of COPB1 to Golgi membranes. Interacts (via trunk domain) with ARF1 (via switch I region); the interaction is direct. Interacts with KCNK2 (via N-terminus); this interaction increases the channel-mediated whole cell currents and promotes plasma membrane expression of KCNK2. Interacts with STX17. Interacts with TMEM115. Interacts with TMEM41B. In terms of tissue distribution, high expression in the lung, kidney, skeletal muscle and small intestine, and lower level of expression in heart, liver, spleen, stomach and fat.

The protein resides in the cytoplasm. It localises to the golgi apparatus membrane. Its subcellular location is the cytoplasmic vesicle. The protein localises to the COPI-coated vesicle membrane. It is found in the cell membrane. The protein resides in the endoplasmic reticulum-Golgi intermediate compartment. Its function is as follows. The coatomer is a cytosolic protein complex that binds to dilysine motifs and reversibly associates with Golgi non-clathrin-coated vesicles, which further mediate biosynthetic protein transport from the ER, via the Golgi up to the trans Golgi network. Coatomer complex is required for budding from Golgi membranes, and is essential for the retrograde Golgi-to-ER transport of dilysine-tagged proteins. In mammals, the coatomer can only be recruited by membranes associated to ADP-ribosylation factors (ARFs), which are small GTP-binding proteins; the complex also influences the Golgi structural integrity, as well as the processing, activity, and endocytic recycling of LDL receptors. Plays a functional role in facilitating the transport of kappa-type opioid receptor mRNAs into axons and enhances translation of these proteins. Required for limiting lipid storage in lipid droplets. Involved in lipid homeostasis by regulating the presence of perilipin family members PLIN2 and PLIN3 at the lipid droplet surface and promoting the association of adipocyte surface triglyceride lipase (PNPLA2) with the lipid droplet to mediate lipolysis. Involved in the Golgi disassembly and reassembly processes during cell cycle. Involved in autophagy by playing a role in early endosome function. Plays a role in organellar compartmentalization of secretory compartments including endoplasmic reticulum (ER)-Golgi intermediate compartment (ERGIC), Golgi, trans-Golgi network (TGN) and recycling endosomes, and in biosynthetic transport of CAV1. In Sus scrofa (Pig), this protein is Coatomer subunit beta.